A 240-amino-acid polypeptide reads, in one-letter code: Large ribosomal subunit protein bL25 (240 aa).

2 disordered regions span residues 1-23 (MATV…ARAE) and 207-240 (PAAA…AKKK).

It belongs to the bacterial ribosomal protein bL25 family. CTC subfamily. Part of the 50S ribosomal subunit; part of the 5S rRNA/L5/L18/L25 subcomplex. Contacts the 5S rRNA. Binds to the 5S rRNA independently of L5 and L18.

Its function is as follows. This is one of the proteins that binds to the 5S RNA in the ribosome where it forms part of the central protuberance. The chain is Large ribosomal subunit protein bL25 from Rhodopseudomonas palustris (strain BisB18).